We begin with the raw amino-acid sequence, 684 residues long: Probable metal-nicotianamine transporter YSL9 (684 aa).

Residues 1–10 show a composition bias toward basic residues; it reads MKQERRRKRQ. A disordered region spans residues 1–55; the sequence is MKQERRRKRQPGPPRLELVVAHPREEEMAGLDGGGDAEEGATHARGGGGAPPPWR. A run of 14 helical transmembrane segments spans residues 58–78, 82–102, 130–150, 174–194, 234–254, 295–315, 341–361, 402–422, 430–450, 462–482, 515–535, 568–588, 612–632, and 642–662; these read LTAR…VIVM, LTTG…FVVL, CAVA…LLGL, GIAW…LALV, VNGF…QWFY, LVNL…WPLI, FICV…IVAL, LAFS…PMMF, VVIA…GAGL, IALF…AGLV, IIAQ…TFFL, FSAL…FAVA, VPFL…LIVF, and AALM…LWIF.

The protein belongs to the YSL (TC 2.A.67.2) family.

Its subcellular location is the membrane. In terms of biological role, may be involved in the transport of nicotianamine-chelated metals. The chain is Probable metal-nicotianamine transporter YSL9 (YSL9) from Oryza sativa subsp. japonica (Rice).